Consider the following 736-residue polypeptide: MIKKTLPVLILLALSGSFSTAVAADKKETQNFYYPETLDLTPLRLHSPESNPWGADFDYATRFQQLDMEALKKDIKDLLTTSQDWWPADYGHYGPFFIRMAWHGAGTYRTYDGRGGASGGQQRFEPLNSWPDNVNLDKARRLLWPVKKKYGSSISWGDLMVLTGNVALESMGFKTLGFAGGREDDWESDLVYWGPDNKPLADNRDKNGKLQKPLAATQMGLIYVNPEGPGGKPDPLASAKDIREAFSRMAMDDEETVALIAGGHTFGKAHGAASPEKCIGAGPDGAPVEEQGLGWKNKCGTGNGKYTITSGLEGAWSTSPTQFTMQYLKNLYKYEWELHKSPAGAYQWKPKKAANIVQDAHDPSVLHPLMMFTTDIALKVDPEYKKITTRFLNDPKAFEQAFARAWFKLTHRDMGPAARYLGNEVPAESFIWQDPLPAADYTMIDGKDIKSLKEQVMDLGIPASELIKTAWASASTFRVTDYRGGNNGARIRLQPEINWEVNEPEKLKKVLASLTSLQREFNKKQSDGKKVSLADLIVLSGNAAIEDAARKAGVELEIPFTPGRTDASQEQTDVASFSVLEPTADGFRNYYSKSRSHISPVESLIDKASQLDLTVPEMTALLGGLRVMDINTNNSSLGVFTDTPGVLDNKFFVNLLDMSTRWSKADKEDTYNGFDRKTGALKWKASSVDLIFSSNPELRAVAEVYASDDARNKFIHDFVKSWNKVMNSDRFDLNNK.

The N-terminal stretch at 1–23 is a signal peptide; that stretch reads MIKKTLPVLILLALSGSFSTAVA. A cross-link (tryptophyl-tyrosyl-methioninium (Trp-Tyr) (with M-249)) is located at residues 102-223; it reads WHGAGTYRTY…LAATQMGLIY (122 aa). His-103 serves as the catalytic Proton acceptor. The tryptophyl-tyrosyl-methioninium (Tyr-Met) (with W-102) cross-link spans 223 to 249; sequence YVNPEGPGGKPDPLASAKDIREAFSRM. His-264 is a heme b binding site.

The protein belongs to the peroxidase family. Peroxidase/catalase subfamily. As to quaternary structure, homodimer or homotetramer. The cofactor is heme b. In terms of processing, formation of the three residue Trp-Tyr-Met cross-link is important for the catalase, but not the peroxidase activity of the enzyme.

The protein resides in the periplasm. The enzyme catalyses H2O2 + AH2 = A + 2 H2O. It carries out the reaction 2 H2O2 = O2 + 2 H2O. Its function is as follows. Bifunctional enzyme with both catalase and broad-spectrum peroxidase activity. In Escherichia coli O157:H7, this protein is Catalase-peroxidase 2.